A 277-amino-acid chain; its full sequence is Putative pyruvate, phosphate dikinase regulatory protein (277 aa).

156–163 (GVSRTSKT) is an ADP binding site.

It belongs to the pyruvate, phosphate/water dikinase regulatory protein family. PDRP subfamily.

The enzyme catalyses N(tele)-phospho-L-histidyl/L-threonyl-[pyruvate, phosphate dikinase] + ADP = N(tele)-phospho-L-histidyl/O-phospho-L-threonyl-[pyruvate, phosphate dikinase] + AMP + H(+). It catalyses the reaction N(tele)-phospho-L-histidyl/O-phospho-L-threonyl-[pyruvate, phosphate dikinase] + phosphate + H(+) = N(tele)-phospho-L-histidyl/L-threonyl-[pyruvate, phosphate dikinase] + diphosphate. Its function is as follows. Bifunctional serine/threonine kinase and phosphorylase involved in the regulation of the pyruvate, phosphate dikinase (PPDK) by catalyzing its phosphorylation/dephosphorylation. The sequence is that of Putative pyruvate, phosphate dikinase regulatory protein from Carboxydothermus hydrogenoformans (strain ATCC BAA-161 / DSM 6008 / Z-2901).